The sequence spans 267 residues: Small ribosomal subunit protein uS5 (267 aa).

Residues 1–37 (MADEAPARSGFRGGFGSRGGRGGRGRGRGRWARGRGK) form a disordered region. The span at 11 to 20 (FRGGFGSRGG) shows a compositional bias: gly residues. Residues 21 to 34 (RGGRGRGRGRWARG) are compositionally biased toward basic residues. Serine 60 is modified (phosphoserine). In terms of domain architecture, S5 DRBM spans 85 to 148 (LKDEVLKIMP…ILAKLSVVPV (64 aa)).

Belongs to the universal ribosomal protein uS5 family.

In terms of biological role, component of the ribosome, a large ribonucleoprotein complex responsible for the synthesis of proteins in the cell. The small ribosomal subunit (SSU) binds messenger RNAs (mRNAs) and translates the encoded message by selecting cognate aminoacyl-transfer RNA (tRNA) molecules. The large subunit (LSU) contains the ribosomal catalytic site termed the peptidyl transferase center (PTC), which catalyzes the formation of peptide bonds, thereby polymerizing the amino acids delivered by tRNAs into a polypeptide chain. The nascent polypeptides leave the ribosome through a tunnel in the LSU and interact with protein factors that function in enzymatic processing, targeting, and the membrane insertion of nascent chains at the exit of the ribosomal tunnel. Plays a role in the assembly and function of the 40S ribosomal subunit. Mutations in this protein affects the control of translational fidelity. Involved in nucleolar processing of pre-18S ribosomal RNA and ribosome assembly. Has a specific developmental role during oogenesis. The protein is Small ribosomal subunit protein uS5 (RpS2) of Drosophila melanogaster (Fruit fly).